We begin with the raw amino-acid sequence, 87 residues long: Large ribosomal subunit protein bL27 (87 aa).

Positions 1–23 (MAHKKGTGSTRNGRDSNAQRLGV) are disordered. Over residues 7–19 (TGSTRNGRDSNAQ) the composition is skewed to polar residues.

The protein belongs to the bacterial ribosomal protein bL27 family.

The protein is Large ribosomal subunit protein bL27 (rpmA) of Synechocystis sp. (strain ATCC 27184 / PCC 6803 / Kazusa).